A 750-amino-acid polypeptide reads, in one-letter code: Eukaryotic translation initiation factor 3 subunit B (750 aa).

An RRM domain is found at 42 to 128; sequence TFVVVDGLPE…HTLRVNKMTD (87 aa). WD repeat units lie at residues 195–234, 236–292, 309–348, and 519–562; these read DRQQWTETFVQWSPQGTYLTSVHAQGVLLWGGASWARLRR, PHPF…PLRS, SAKFPWPAFKWSADDKYVARLNQGTSISVYELPKMNLMDK, and LDKK…EKPE.

Belongs to the eIF-3 subunit B family. In terms of assembly, component of the eukaryotic translation initiation factor 3 (eIF-3) complex.

It is found in the cytoplasm. Its function is as follows. RNA-binding component of the eukaryotic translation initiation factor 3 (eIF-3) complex, which is involved in protein synthesis of a specialized repertoire of mRNAs and, together with other initiation factors, stimulates binding of mRNA and methionyl-tRNAi to the 40S ribosome. The eIF-3 complex specifically targets and initiates translation of a subset of mRNAs involved in cell proliferation. The chain is Eukaryotic translation initiation factor 3 subunit B from Chaetomium globosum (strain ATCC 6205 / CBS 148.51 / DSM 1962 / NBRC 6347 / NRRL 1970) (Soil fungus).